Here is a 466-residue protein sequence, read N- to C-terminus: F-box/LRR-repeat protein fbxl-1 (466 aa).

In terms of domain architecture, F-box spans 54 to 100 (SLINRVLPKEVLLKVFSFLDTKALCRSAQVCRSWSILALDGSNWQRV). LRR repeat units lie at residues 122–147 (GGFLKELSLKGCENVHDSALRTFTSR), 148–173 (CPNLEHLSLYRCKRVTDASCENLGRY), 174–199 (CHKLNYLNLENCSSITDRAMKYIGDG), 200–225 (CPNLSYLNISWCDAIQDRGVQIILSN), 226–251 (CKSLDTLILRGCEGLTENVFGSVEAH), 252–277 (MGAIKKLNLLQCFQLTDITVQNIANG), 278–303 (ATALEYLCMSNCNQISDRSLVSLGQH), 304–329 (SHNLKVLELSGCTLLGDNGFIPLARG), 330–355 (CRQLERLDMEDCSLISDHTINSLANN), 356–381 (CTALRELSLSHCELITDESIQNLASK), and 408–433 (CKALKRIDLYDCQNVSKEAIVRFQHH).

As to quaternary structure, component of the SCF (SKP1-CUL1-F-box protein)-type E3 ubiquitin ligase complex. In terms of tissue distribution, expressed in neuroglial cells such as the socket cell and sheath cell, neurosecretory motor neurons and regions around the pharynx and anus.

The protein localises to the perikaryon. The protein resides in the cell projection. It is found in the dendrite. Its subcellular location is the cilium. It localises to the axon. Functionally, substrate-recognition component of the SCF (SKP1-CUL1-F-box protein)-type E3 ubiquitin ligase complex. Plays a role in regulating the entry into the dauer state. In hermaphrodites, may play a role in modulating the rate of defecation. This chain is F-box/LRR-repeat protein fbxl-1, found in Caenorhabditis elegans.